Reading from the N-terminus, the 979-residue chain is Zinc finger protein 280D (979 aa).

Glycyl lysine isopeptide (Lys-Gly) (interchain with G-Cter in SUMO2) cross-links involve residues K32, K34, K74, and K87. Over residues 89–101 (TSQHYTNPTSNPV) the composition is skewed to polar residues. The segment at 89-119 (TSQHYTNPTSNPVPASPINFHPESRSSDSSV) is disordered. S104 is modified (phosphoserine). Glycyl lysine isopeptide (Lys-Gly) (interchain with G-Cter in SUMO2) cross-links involve residues K126 and K140. Residues 157 to 236 (YQGGPTLSMA…TSSNQSKNGT (80 aa)) are disordered. The segment covering 169–187 (SESSFLSKRPSTSEVNNVN) has biased composition (polar residues). Glycyl lysine isopeptide (Lys-Gly) (interchain with G-Cter in SUMO2) cross-links involve residues K189, K210, K223, K233, K275, K284, and K292. Positions 195 to 235 (ESVSGANSSAVLPSVKSPSVTSSQAMLAKGTNTSSNQSKNG) are enriched in polar residues. C2H2-type zinc fingers lie at residues 321–343 (FKCF…MKHH) and 358–381 (TTCQ…ESTH). The C2H2-type 3; degenerate zinc finger occupies 388-412 (TICKICELSFETEHVLLQHMKDNHK). 2 consecutive C2H2-type zinc fingers follow at residues 418-441 (YVCQ…RTSH) and 449-469 (CPFC…YMKH). Disordered stretches follow at residues 523 to 608 (GPLQ…NKKS), 739 to 809 (LKKE…SDKE), and 896 to 979 (FLRK…KERS). Residues 527-541 (SGASPTPSISASAST) show a composition bias toward low complexity. Composition is skewed to polar residues over residues 542–584 (LQLS…NGSK) and 592–608 (SNMQ…NKKS). S545 carries the phosphoserine modification. A Glycyl lysine isopeptide (Lys-Gly) (interchain with G-Cter in SUMO2) cross-link involves residue K550. The segment covering 739-784 (LKKEAPAKEQEPVSKEIARPNMAERETETSNSESKQDKAASSKEKN) has biased composition (basic and acidic residues). A Glycyl lysine isopeptide (Lys-Gly) (interchain with G-Cter in SUMO2) cross-link involves residue K740. A compositionally biased stretch (polar residues) spans 786 to 797 (CNANSFEGSSTT). A compositionally biased stretch (basic and acidic residues) spans 798–809 (KSEESITVSDKE). The span at 905–914 (SVSSDVSEQG) shows a compositional bias: polar residues. Phosphoserine occurs at positions 908 and 911. The segment covering 970–979 (VDLEDEKERS) has biased composition (acidic residues). A Glycyl lysine isopeptide (Lys-Gly) (interchain with G-Cter in SUMO2) cross-link involves residue K976.

The protein localises to the nucleus. Its function is as follows. May function as a transcription factor. This is Zinc finger protein 280D (ZNF280D) from Homo sapiens (Human).